Reading from the N-terminus, the 626-residue chain is Carnitine O-acetyltransferase (626 aa).

The residue at position 93 (Lys93) is an N6-succinyllysine. Residue Lys261 is modified to N6-acetyllysine; alternate. An N6-succinyllysine; alternate modification is found at Lys261. Residue Lys268 is modified to N6-acetyllysine. The active-site Proton acceptor is His343. Residues Lys419 and 423-430 each bind CoA; that span reads KSEKLSPD. Tyr452 and Ser454 together coordinate (R)-carnitine. Residue Ser456 coordinates CoA. Residue Thr465 participates in (R)-carnitine binding. Residues Arg504 and Gln555 each coordinate CoA. The short motif at 624-626 is the Microbody targeting signal element; that stretch reads AKL.

Belongs to the carnitine/choline acetyltransferase family. As to quaternary structure, monomer. As to expression, mostly in skeletal muscle, less in heart, liver and pancreas, only weakly detectable in brain, placenta, lung and kidney.

It localises to the endoplasmic reticulum. Its subcellular location is the peroxisome. It is found in the mitochondrion inner membrane. The protein resides in the mitochondrion. The enzyme catalyses (R)-carnitine + acetyl-CoA = O-acetyl-(R)-carnitine + CoA. It carries out the reaction propanoyl-CoA + (R)-carnitine = O-propanoyl-(R)-carnitine + CoA. It catalyses the reaction butanoyl-CoA + (R)-carnitine = O-butanoyl-(R)-carnitine + CoA. The catalysed reaction is hexanoyl-CoA + (R)-carnitine = O-hexanoyl-(R)-carnitine + CoA. The enzyme catalyses octanoyl-CoA + (R)-carnitine = O-octanoyl-(R)-carnitine + CoA. It carries out the reaction decanoyl-CoA + (R)-carnitine = O-decanoyl-(R)-carnitine + CoA. It catalyses the reaction 3-methylbutanoyl-CoA + (R)-carnitine = O-3-methylbutanoyl-(R)-carnitine + CoA. The catalysed reaction is 2-methylpropanoyl-CoA + (R)-carnitine = O-isobutanoyl-(R)-carnitine + CoA. The enzyme catalyses 2-methylbutanoyl-CoA + (R)-carnitine = O-2-methylbutanoyl-(R)-carnitine + CoA. It carries out the reaction acetoacetyl-CoA + (R)-carnitine = O-3-oxobutanoyl-(R)-carnitine + CoA. It catalyses the reaction 3-hydroxybutanoyl-CoA + (R)-carnitine = O-3-hydroxybutanoyl-(R)-carnitine + CoA. The catalysed reaction is 4,8-dimethylnonanoyl-CoA + (R)-carnitine = O-4,8-dimethylnonanoyl-(R)-carnitine + CoA. The enzyme catalyses 2,6-dimethylheptanoyl-CoA + (R)-carnitine = O-2,6-dimethylheptanoyl-(R)-carnitine + CoA. Functionally, catalyzes the reversible transfer of acyl groups from carnitine to coenzyme A (CoA) and regulates the acyl-CoA/CoA ratio. Also plays a crucial role in the transport of fatty acids for beta-oxidation. Responsible for the synthesis of short- and branched-chain acylcarnitines. Active towards some branched-chain amino acid oxidation pathway (BCAAO) intermediates. Trans-2-enoyl-CoAs and 2-methylacyl-CoAs are poor substrates. The sequence is that of Carnitine O-acetyltransferase from Homo sapiens (Human).